Consider the following 1069-residue polypeptide: DNA annealing helicase and endonuclease ZRANB3 (1069 aa).

Residues 46–208 (VFALRRDGRC…FMQIEALFPQ (163 aa)) enclose the Helicase ATP-binding domain. Positions 46 to 481 (VFALRRDGRC…GRKEKLQATE (436 aa)) are DNA annealing helicase activity. Position 59-66 (59-66 (DEMGLGKT)) interacts with ATP. Residues 157–160 (DESH) carry the DEAH box motif. Positions 325–485 (AVKDYIKMLL…KLQATEDDKE (161 aa)) constitute a Helicase C-terminal domain. The PIP-box signature appears at 518–525 (QHDIRSFF). The RanBP2-type zinc finger occupies 617–646 (PEKGWQCGFCTFLNNPGLPYCEMCENPRSR). The segment at 648-720 (AGRNHLQDNN…PEIGQLNNSG (73 aa)) is disordered. 2 stretches are compositionally biased toward basic and acidic residues: residues 652 to 661 (HLQDNNKNDE) and 677 to 707 (ECER…EDRL). In terms of domain architecture, HNH spans 1001 to 1041 (PGEGHFWQVDHIRPVYEGGGQCSLDNLQTLCTVCHKERTAQ). The segment at 1001-1069 (PGEGHFWQVD…SDITRFLVKK (69 aa)) is endonuclease activity. The APIM motif signature appears at 1064–1068 (RFLVK).

This sequence belongs to the SNF2/RAD54 helicase family. As to quaternary structure, interacts (via PIP-box and RanBP2-type zinc finger) with PCNA (when PCNA is polyubiquitinated via 'Lys-63'-linked polyubiquitin).

It localises to the nucleus. The protein localises to the chromosome. Its function is as follows. DNA annealing helicase and endonuclease required to maintain genome stability at stalled or collapsed replication forks by facilitating fork restart and limiting inappropriate recombination that could occur during template switching events. Recruited to the sites of stalled DNA replication by polyubiquitinated PCNA and acts as a structure-specific endonuclease that cleaves the replication fork D-loop intermediate, generating an accessible 3'-OH group in the template of the leading strand, which is amenable to extension by DNA polymerase. In addition to endonuclease activity, also catalyzes the fork regression via annealing helicase activity in order to prevent disintegration of the replication fork and the formation of double-strand breaks. The protein is DNA annealing helicase and endonuclease ZRANB3 (Zranb3) of Mus musculus (Mouse).